A 327-amino-acid chain; its full sequence is Biotin synthase (327 aa).

Residues 51–278 enclose the Radical SAM core domain; that stretch reads QTIQLSTLMS…KSYVRLSAGR (228 aa). Residues cysteine 66, cysteine 70, and cysteine 73 each contribute to the [4Fe-4S] cluster site. [2Fe-2S] cluster is bound by residues cysteine 110, cysteine 141, cysteine 201, and arginine 273.

The protein belongs to the radical SAM superfamily. Biotin synthase family. As to quaternary structure, homodimer. It depends on [4Fe-4S] cluster as a cofactor. [2Fe-2S] cluster serves as cofactor.

It carries out the reaction (4R,5S)-dethiobiotin + (sulfur carrier)-SH + 2 reduced [2Fe-2S]-[ferredoxin] + 2 S-adenosyl-L-methionine = (sulfur carrier)-H + biotin + 2 5'-deoxyadenosine + 2 L-methionine + 2 oxidized [2Fe-2S]-[ferredoxin]. Its pathway is cofactor biosynthesis; biotin biosynthesis; biotin from 7,8-diaminononanoate: step 2/2. Its function is as follows. Catalyzes the conversion of dethiobiotin (DTB) to biotin by the insertion of a sulfur atom into dethiobiotin via a radical-based mechanism. The sequence is that of Biotin synthase from Histophilus somni (strain 2336) (Haemophilus somnus).